A 404-amino-acid chain; its full sequence is DNA gyrase subunit B (404 aa).

Residues Ser-321–Asp-404 form the Toprim domain. Positions 327, 400, and 402 each coordinate Mg(2+).

Belongs to the type II topoisomerase GyrB family. In terms of assembly, heterotetramer, composed of two GyrA and two GyrB chains. In the heterotetramer, GyrA contains the active site tyrosine that forms a transient covalent intermediate with DNA, while GyrB binds cofactors and catalyzes ATP hydrolysis. Mg(2+) serves as cofactor. Mn(2+) is required as a cofactor. The cofactor is Ca(2+).

The protein localises to the cytoplasm. It carries out the reaction ATP-dependent breakage, passage and rejoining of double-stranded DNA.. A type II topoisomerase that negatively supercoils closed circular double-stranded (ds) DNA in an ATP-dependent manner to modulate DNA topology and maintain chromosomes in an underwound state. Negative supercoiling favors strand separation, and DNA replication, transcription, recombination and repair, all of which involve strand separation. Also able to catalyze the interconversion of other topological isomers of dsDNA rings, including catenanes and knotted rings. Type II topoisomerases break and join 2 DNA strands simultaneously in an ATP-dependent manner. This chain is DNA gyrase subunit B (gyrB), found in Bacillus mycoides.